A 1029-amino-acid polypeptide reads, in one-letter code: Beta-galactosidase (1029 aa).

2 residues coordinate substrate: asparagine 108 and aspartate 207. Residue aspartate 207 participates in Na(+) binding. Residues glutamate 422, histidine 424, and glutamate 467 each coordinate Mg(2+). Residues glutamate 467 and glutamate 543–histidine 546 contribute to the substrate site. Glutamate 467 serves as the catalytic Proton donor. Glutamate 543 serves as the catalytic Nucleophile. Asparagine 603 lines the Mg(2+) pocket. The Na(+) site is built by phenylalanine 607 and asparagine 610. Substrate is bound by residues asparagine 610 and tryptophan 1005.

It belongs to the glycosyl hydrolase 2 family. In terms of assembly, homotetramer. It depends on Mg(2+) as a cofactor. Na(+) serves as cofactor.

The enzyme catalyses Hydrolysis of terminal non-reducing beta-D-galactose residues in beta-D-galactosides.. The chain is Beta-galactosidase from Escherichia coli.